The chain runs to 424 residues: Tubulin gamma chain, nucleomorph (424 aa).

Residue 137–143 (NGGTGAG) coordinates GTP.

The protein belongs to the tubulin family.

Functionally, tubulin is the major constituent of microtubules. The gamma chain is found at microtubule organizing centers (MTOC) such as the spindle poles or the centrosome, suggesting that it is involved in the minus-end nucleation of microtubule assembly. This chain is Tubulin gamma chain, nucleomorph (tubG), found in Guillardia theta (Cryptophyte).